The primary structure comprises 288 residues: MAIARQDVNISSPEATTSDAQSTANPTVLVFDSGVGGLSIYREIREKLPDAHYIYVFDNEAFPYGEKPQEFIIERVVRIVSAVAQQHELAAIVIACNTASTVSLPALRAKFTDIPIVGVVPAIKPAAKLTCNGVVGLLATRATVKRPYTHELIERFATECKVHLLGSAELVELAEKKLHGEKVSCDELRRILAPWLKMKEPPDTVVLGCTHFPLLEEELLSVLPDGTRIIDSGGAIARRTAWLVVNQDKIRGSKEISFAYCLKEDEYSELLKPVLADFGFKMLRKLAL.

The disordered stretch occupies residues 1-21; the sequence is MAIARQDVNISSPEATTSDAQ. Residues 8–21 are compositionally biased toward polar residues; the sequence is VNISSPEATTSDAQ. Substrate-binding positions include 32–33 and 64–65; these read DS and YG. The active-site Proton donor/acceptor is Cys96. 97-98 contacts substrate; it reads NT. Catalysis depends on Cys209, which acts as the Proton donor/acceptor. 210-211 contacts substrate; it reads TH.

It belongs to the aspartate/glutamate racemases family.

The enzyme catalyses L-glutamate = D-glutamate. It functions in the pathway cell wall biogenesis; peptidoglycan biosynthesis. Functionally, provides the (R)-glutamate required for cell wall biosynthesis. The protein is Glutamate racemase of Proteus mirabilis (strain HI4320).